We begin with the raw amino-acid sequence, 399 residues long: Zona occludens toxin (399 aa).

Functionally, increases the permeability of the small intestine mucosa by affecting the structure of intercellular tight junctions (zonula occludens). The protein is Zona occludens toxin (zot) of Vibrio cholerae serotype O1 (strain ATCC 39315 / El Tor Inaba N16961).